The following is a 541-amino-acid chain: Atlastin (541 aa).

Residues M1–A424 lie on the Cytoplasmic side of the membrane. The region spanning D35–N284 is the GB1/RHD3-type G domain. GDP contacts are provided by R48, K49, G50, K51, and S52. GTP-binding residues include R48, K49, G50, K51, S52, and F53. S52 is a binding site for Mg(2+). Residue D121 participates in Mg(2+) binding. GDP-binding residues include R192, D193, and V251. 3 residues coordinate GTP: R192, D193, and V251. The interval M322–S413 is 3HB (three-helix bundle) domain. The tract at residues K414–T422 is linker. A helical transmembrane segment spans residues V425–L445. Residues Y446–F448 are Lumenal-facing. The chain crosses the membrane as a helical span at residues A449–I469. The Cytoplasmic portion of the chain corresponds to R470 to S541. Phosphothreonine is present on T514.

The protein belongs to the TRAFAC class dynamin-like GTPase superfamily. GB1/RHD3 GTPase family. GB1 subfamily. Monomeric and homodimeric. The homodimer, transiently formed by two molecules on opposing membranes, is the active form mediating ER membrane fusion. Interacts with spas; interaction may regulate microtubule dynamics. Ubiquitously expressed.

It is found in the endoplasmic reticulum membrane. It localises to the golgi apparatus membrane. It catalyses the reaction GTP + H2O = GDP + phosphate + H(+). In terms of biological role, membrane-anchored GTPase that mediates the GTP-dependent fusion of endoplasmic reticulum (ER) membranes, maintaining the continuous ER network. It facilitates the formation of three-way junctions where ER tubules intersect. Two atlastin-1 on neighboring ER tubules bind GTP and form loose homodimers through the GB1/RHD3-type G domains and 3HB regions. Upon GTP hydrolysis, the 3HB regions tighten, pulling the membranes together to drive their fusion. After fusion, the homodimer disassembles upon release of inorganic phosphate (Pi). Subsequently, GDP dissociates, resetting the monomers to a conformation ready for a new fusion cycle. May also regulate more or less directly Golgi biogenesis. May also regulate microtubule polymerization and Golgi biogenesis. Required for dopaminergic neurons survival and the growth of muscles and synapses at neuromuscular junctions. The chain is Atlastin (atl) from Drosophila melanogaster (Fruit fly).